A 1202-amino-acid chain; its full sequence is Metabotropic glycine receptor (1202 aa).

An N-terminal signal peptide occupies residues 1 to 24 (MGAMAYSLLLCLLLAHLGLGEVGA). Residues 25–62 (SLDPSERPDSSRERTSRGKQHGQQLPRASAPDPSIPWS) form a disordered region. Over 25–417 (SLDPSERPDS…CFVQEDKYLR (393 aa)) the chain is Extracellular. Positions 28-40 (PSERPDSSRERTS) are enriched in basic and acidic residues. The tract at residues 85–281 (YLYTGDFHQL…CENGSYKPGW (197 aa)) is cache-like region. Asn-98 and Asn-143 each carry an N-linked (GlcNAc...) asparagine glycan. Cys-99 and Cys-272 form a disulfide bridge. Glycine-binding residues include Ser-172 and Arg-173. Asn-215 is a glycosylation site (N-linked (GlcNAc...) asparagine). The interval 234–253 (LHRRGSNQGPRGLGHSWRRR) is disordered. Glu-271 provides a ligand contact to glycine. N-linked (GlcNAc...) asparagine glycosylation occurs at Asn-274. Asp-307 lines the glycine pocket. Residue Asn-333 is glycosylated (N-linked (GlcNAc...) asparagine). The helical transmembrane segment at 418 to 439 (LAIISFQALCMLLDFVSMLVVY) threads the bilayer. At 440–451 (HFRKAKSIRASG) the chain is on the cytoplasmic side. A helical transmembrane segment spans residues 452 to 474 (LILLETILFGSLLLYFPVVILYF). The Extracellular portion of the chain corresponds to 475–478 (EPST). The helical transmembrane segment at 479-501 (FRCILLRWVRLLGFATVYGTVTL) threads the bilayer. A disulfide bridge connects residues Cys-481 and Cys-573. At 502 to 525 (KLHRVLKVFLSRTAQRIPYMTGGR) the chain is on the cytoplasmic side. A helical transmembrane segment spans residues 526-547 (VMRMLAVIVLVVFWFLVGWTSS). Residues 548–576 (MCQNLERDILLVGQGQTSDNLTFNMCLID) are Extracellular-facing. The helical transmembrane segment at 577–597 (RWDYMTAVAEFLFLLWGIYLC) threads the bilayer. At 598–611 (YAVRTVPSAFHEPR) the chain is on the cytoplasmic side. The helical transmembrane segment at 612–633 (YMAVAVHNELIITAIFHTIRFV) threads the bilayer. Residues 634-642 (LASRLQPDW) lie on the Extracellular side of the membrane. A helical transmembrane segment spans residues 643-664 (MLMLYFAHTHLTVTVTIGLLLI). Topologically, residues 665–1202 (PKFSHSSNNP…SASKIPGPRK (538 aa)) are cytoplasmic. A phosphoserine mark is found at Ser-694, Ser-705, and Ser-708. Disordered stretches follow at residues 757-899 (RITE…TSML) and 914-995 (LGLA…QIKD). Composition is skewed to basic and acidic residues over residues 769–781 (CSKE…DHSA) and 819–828 (STYDHVRDQT). Lys-774 is covalently cross-linked (Glycyl lysine isopeptide (Lys-Gly) (interchain with G-Cter in ubiquitin)). Residues 845-856 (ENSTLESLSSKK) are compositionally biased toward low complexity. A Phosphoserine modification is found at Ser-865. Residues 925–943 (MEDRAKSQKPQPKDRETNR) are compositionally biased toward basic and acidic residues. Polar residues-rich tracts occupy residues 944 to 958 (KYSN…PNSN) and 975 to 994 (QRVN…TQIK). Ser-946 carries the post-translational modification Phosphoserine. The VCPWE motif 1 signature appears at 1002–1006 (VCPWE). Phosphoserine is present on Ser-1061. A VCPWE motif 2 motif is present at residues 1067 to 1071 (VCPWE). A Phosphoserine modification is found at Ser-1076. Composition is skewed to polar residues over residues 1132 to 1144 (QMGD…SSSV) and 1151 to 1162 (CISSNNSPQPLT). Residues 1132–1162 (QMGDQEKQTSSSVDIIPGSCISSNNSPQPLT) form a disordered region. Positions 1167–1171 (VCPWE) match the VCPWE motif 3 motif.

This sequence belongs to the G-protein coupled receptor 3 family. In terms of assembly, homodimer. Associates with the RGS7-GNB5 complex, promoting its localization to the cell membrane and regulating its GTPase activator activity. Interacts (via VCPWE motifs) with GNAO1. Interacts with GPC4. Interacts with EGFLAM.

It is found in the cell membrane. Its subcellular location is the postsynaptic cell membrane. The protein resides in the presynaptic cell membrane. It localises to the nucleus. Its function is as follows. Metabotropic receptor for glycine that controls synapse formation and function in the brain. Acts as an atypical G-protein coupled receptor that recruits and regulates the RGS7-GNB5 complex instead of activating G proteins. In absence of glycine ligand, promotes the GTPase activator activity of RGS7, increasing the GTPase activity of G protein alpha subunits, thereby driving them into their inactive GDP-bound form. Glycine-binding changes the conformation of the intracellular surface, inhibiting the GTPase activator activity of the RGS7-GNB5 complex, promoting G protein alpha subunits into their active GTP-bound form and regulating cAMP levels. Also able to bind taurine, a compound closely related to glycine, but with a two-fold lower affinity. Glycine receptor-dependent regulation of cAMP controls key ion channels, kinases and neurotrophic factors involved in neuronal excitability and synaptic transmission. Plays a pivotal role in regulating mood and cognition via its ability to regulate neuronal excitability in L2/L3 pyramidal neurons of the prefrontal cortex. Also involved in spatial learning by regulating hippocampal CA1 neuronal excitability. Acts as a synaptic organizer in the hippocampus, required for proper mossy fiber-CA3 neurocircuitry establishment, structure and function: induces presynaptic differentiation in contacting axons via its interaction with GPC4. In addition to glycine, may also act as a receptor for osteocalcin (BGLAP) hormone: osteocalcin-binding initiates a signaling response that prevents neuronal apoptosis in the hippocampus and regulates the synthesis of neurotransmitters. The sequence is that of Metabotropic glycine receptor from Rattus norvegicus (Rat).